The chain runs to 320 residues: tRNA dimethylallyltransferase (320 aa).

Residue 16-23 (GPTASGKT) coordinates ATP. 18-23 (TASGKT) is a substrate binding site. 3 interaction with substrate tRNA regions span residues 41–44 (DSAL), 165–169 (QRIQR), and 247–252 (RCVGYR).

The protein belongs to the IPP transferase family. In terms of assembly, monomer. It depends on Mg(2+) as a cofactor.

The catalysed reaction is adenosine(37) in tRNA + dimethylallyl diphosphate = N(6)-dimethylallyladenosine(37) in tRNA + diphosphate. Its function is as follows. Catalyzes the transfer of a dimethylallyl group onto the adenine at position 37 in tRNAs that read codons beginning with uridine, leading to the formation of N6-(dimethylallyl)adenosine (i(6)A). In Azoarcus sp. (strain BH72), this protein is tRNA dimethylallyltransferase.